Consider the following 295-residue polypeptide: Acetylglutamate kinase (295 aa).

Residues 66-67 (GG), arginine 88, and asparagine 193 contribute to the substrate site.

The protein belongs to the acetylglutamate kinase family. ArgB subfamily.

It localises to the cytoplasm. It catalyses the reaction N-acetyl-L-glutamate + ATP = N-acetyl-L-glutamyl 5-phosphate + ADP. It functions in the pathway amino-acid biosynthesis; L-arginine biosynthesis; N(2)-acetyl-L-ornithine from L-glutamate: step 2/4. Functionally, catalyzes the ATP-dependent phosphorylation of N-acetyl-L-glutamate. The chain is Acetylglutamate kinase from Rhizobium leguminosarum bv. trifolii (strain WSM2304).